The chain runs to 315 residues: Ribosomal RNA small subunit methyltransferase H (315 aa).

S-adenosyl-L-methionine-binding positions include 37 to 39 (GGH), Asp57, Phe83, Asp105, and Gln112.

Belongs to the methyltransferase superfamily. RsmH family.

Its subcellular location is the cytoplasm. It catalyses the reaction cytidine(1402) in 16S rRNA + S-adenosyl-L-methionine = N(4)-methylcytidine(1402) in 16S rRNA + S-adenosyl-L-homocysteine + H(+). Its function is as follows. Specifically methylates the N4 position of cytidine in position 1402 (C1402) of 16S rRNA. This is Ribosomal RNA small subunit methyltransferase H from Pseudomonas putida (strain GB-1).